A 370-amino-acid polypeptide reads, in one-letter code: Queuine tRNA-ribosyltransferase (370 aa).

The active-site Proton acceptor is the Asp-89. Substrate is bound by residues 89 to 93, Asp-143, Gln-187, and Gly-214; that span reads DSGGF. The segment at 245 to 251 is RNA binding; it reads GVGKPED. The active-site Nucleophile is the Asp-264. The RNA binding; important for wobble base 34 recognition stretch occupies residues 269–273; it reads TRNAR. Residues Cys-302, Cys-304, Cys-307, and His-333 each coordinate Zn(2+).

Belongs to the queuine tRNA-ribosyltransferase family. As to quaternary structure, homodimer. Within each dimer, one monomer is responsible for RNA recognition and catalysis, while the other monomer binds to the replacement base PreQ1. Zn(2+) serves as cofactor.

The catalysed reaction is 7-aminomethyl-7-carbaguanine + guanosine(34) in tRNA = 7-aminomethyl-7-carbaguanosine(34) in tRNA + guanine. Its pathway is tRNA modification; tRNA-queuosine biosynthesis. Functionally, catalyzes the base-exchange of a guanine (G) residue with the queuine precursor 7-aminomethyl-7-deazaguanine (PreQ1) at position 34 (anticodon wobble position) in tRNAs with GU(N) anticodons (tRNA-Asp, -Asn, -His and -Tyr). Catalysis occurs through a double-displacement mechanism. The nucleophile active site attacks the C1' of nucleotide 34 to detach the guanine base from the RNA, forming a covalent enzyme-RNA intermediate. The proton acceptor active site deprotonates the incoming PreQ1, allowing a nucleophilic attack on the C1' of the ribose to form the product. After dissociation, two additional enzymatic reactions on the tRNA convert PreQ1 to queuine (Q), resulting in the hypermodified nucleoside queuosine (7-(((4,5-cis-dihydroxy-2-cyclopenten-1-yl)amino)methyl)-7-deazaguanosine). This Baumannia cicadellinicola subsp. Homalodisca coagulata protein is Queuine tRNA-ribosyltransferase.